We begin with the raw amino-acid sequence, 150 residues long: CCAAT/enhancer-binding protein gamma (150 aa).

Residue Lys3 forms a Glycyl lysine isopeptide (Lys-Gly) (interchain with G-Cter in SUMO2) linkage. The segment at 27–94 is disordered; it reads GLQQVPQLVP…QKAQDTLQRV (68 aa). A compositionally biased stretch (low complexity) spans 28 to 37; sequence LQQVPQLVPA. Residues 56–72 show a composition bias toward basic and acidic residues; the sequence is SPMDRNSDEYRQRRERN. Positions 62 to 125 constitute a bZIP domain; it reads SDEYRQRRER…SVLKDLFLEH (64 aa). Positions 66–93 are basic motif; sequence RQRRERNNMAVKKSRLKSKQKAQDTLQR. Residues 97 to 118 form a leucine-zipper region; it reads LKEENERLEAKIKLLTKELSVL.

It belongs to the bZIP family. C/EBP subfamily. In terms of assembly, binds DNA as a dimer and can form stable heterodimers with CEBPA and CEBPB. Interacts with ZNF638; this interaction increases transcriptional activation.

Its subcellular location is the nucleus. In terms of biological role, transcription factor that binds to the promoter and the enhancer regions of target genes. Binds to the promoter and the enhancer of the alpha-1-fetoprotein gene. Binds to the enhancer element PRE-I (positive regulatory element-I) of the IL-4 gene. Binds to the promoter and the enhancer of the immunoglobulin heavy chain. Binds to GPE1, a cis-acting element in the G-CSF gene promoter. The protein is CCAAT/enhancer-binding protein gamma (Cebpg) of Rattus norvegicus (Rat).